The following is a 257-amino-acid chain: Acyl-[acyl-carrier-protein]--UDP-N-acetylglucosamine O-acyltransferase (257 aa).

Belongs to the transferase hexapeptide repeat family. LpxA subfamily. Homotrimer.

It is found in the cytoplasm. The enzyme catalyses a (3R)-hydroxyacyl-[ACP] + UDP-N-acetyl-alpha-D-glucosamine = a UDP-3-O-[(3R)-3-hydroxyacyl]-N-acetyl-alpha-D-glucosamine + holo-[ACP]. Its pathway is glycolipid biosynthesis; lipid IV(A) biosynthesis; lipid IV(A) from (3R)-3-hydroxytetradecanoyl-[acyl-carrier-protein] and UDP-N-acetyl-alpha-D-glucosamine: step 1/6. Functionally, involved in the biosynthesis of lipid A, a phosphorylated glycolipid that anchors the lipopolysaccharide to the outer membrane of the cell. This is Acyl-[acyl-carrier-protein]--UDP-N-acetylglucosamine O-acyltransferase from Anaeromyxobacter dehalogenans (strain 2CP-1 / ATCC BAA-258).